The chain runs to 141 residues: Large ribosomal subunit protein uL16 (141 aa).

The interval 1–23 (MLMPKRTKYRKQMKGRNRGKAHR) is disordered.

This sequence belongs to the universal ribosomal protein uL16 family. As to quaternary structure, part of the 50S ribosomal subunit.

Binds 23S rRNA and is also seen to make contacts with the A and possibly P site tRNAs. This chain is Large ribosomal subunit protein uL16, found in Helicobacter pylori (strain J99 / ATCC 700824) (Campylobacter pylori J99).